The primary structure comprises 104 residues: uncharacterized protein (104 aa).

Transmembrane regions (helical) follow at residues 53–73 (IWGIISFIISASIFCYINWDF) and 74–94 (ILNLLFYSIIAFIVMSILILI).

The protein localises to the cell membrane. This is an uncharacterized protein from Methanocaldococcus jannaschii (strain ATCC 43067 / DSM 2661 / JAL-1 / JCM 10045 / NBRC 100440) (Methanococcus jannaschii).